The primary structure comprises 33 residues: Pardaxin P-2 (33 aa).

Belongs to the pardaxin family. In aqueous solution exists as a tetramer.

Its subcellular location is the secreted. It is found in the target cell membrane. Exhibits unusual shark repellent and surfactant properties. Forms voltage-dependent, ion-permeable channels in membranes. At high concentration causes cell membrane lysis. The sequence is that of Pardaxin P-2 from Pardachirus pavoninus (Peacock sole).